A 95-amino-acid polypeptide reads, in one-letter code: MVKIRLMRMGRVHYPLYRIVAVDSRVKRNGKYIALIGHLNPALKENKCKLDETVALDWLNKGAIPTDTVRSLFSESGLWKKFIESKNKKETSPKK.

It belongs to the bacterial ribosomal protein bS16 family.

The chain is Small ribosomal subunit protein bS16 from Mycoplasma genitalium (strain ATCC 33530 / DSM 19775 / NCTC 10195 / G37) (Mycoplasmoides genitalium).